The following is a 324-amino-acid chain: MSALDVDSISDIAPGLSPVTAIHYGRIQVMLFRSHLAEFAEEDLVYAMDNSVVVFGEEALLMVAPDESSIAICTYPFGLMMMEWGNWDILAVSPPSRTPTIPSESVLGISNQGGANVEQQEQSSHTIDMTLPSNFFEQSSVTQSNGTSRPRNQFVLYYQWLLDTLFSEDPSLSARNISQIVAGLWNSEHPAAKARFRELAEMEVHRHRAENPHLYPDQPRFPTTDPVPPRMRYPCVISPEDRQRILRMLDFVWEESNGQLAAEEAALNDVVQPQQAEEVGPFPDFEWEEPNHIIDMSTDLSVAQDPDFMMTEDDSMRFLLKQAS.

The segment at residues 147-215 (TSRPRNQFVL…RHRAENPHLY (69 aa)) is a DNA-binding region (HMG box).

The protein localises to the nucleus. In terms of biological role, required, together with mating-type protein A-2, for efficient ascospore formation. The protein is Mating-type protein A-3 (mtA-3) of Neurospora crassa (strain ATCC 24698 / 74-OR23-1A / CBS 708.71 / DSM 1257 / FGSC 987).